The sequence spans 451 residues: Tubulin alpha-3 chain (451 aa).

Position 11 (Q11) interacts with GTP. K40 bears the N6-acetyllysine mark. 7 residues coordinate GTP: E71, S140, G144, T145, T179, N206, and N228. Mg(2+) is bound at residue E71. E254 is a catalytic residue.

The protein belongs to the tubulin family. Dimer of alpha and beta chains. A typical microtubule is a hollow water-filled tube with an outer diameter of 25 nm and an inner diameter of 15 nM. Alpha-beta heterodimers associate head-to-tail to form protofilaments running lengthwise along the microtubule wall with the beta-tubulin subunit facing the microtubule plus end conferring a structural polarity. Microtubules usually have 13 protofilaments but different protofilament numbers can be found in some organisms and specialized cells. It depends on Mg(2+) as a cofactor. In terms of processing, undergoes a tyrosination/detyrosination cycle, the cyclic removal and re-addition of a C-terminal tyrosine residue by the enzymes tubulin tyrosine carboxypeptidase (TTCP) and tubulin tyrosine ligase (TTL), respectively. Acetylation of alpha chains at Lys-40 stabilizes microtubules and affects affinity and processivity of microtubule motors. This modification has a role in multiple cellular functions, ranging from cell motility, cell cycle progression or cell differentiation to intracellular trafficking and signaling.

The protein resides in the cytoplasm. The protein localises to the cytoskeleton. The catalysed reaction is GTP + H2O = GDP + phosphate + H(+). Tubulin is the major constituent of microtubules, a cylinder consisting of laterally associated linear protofilaments composed of alpha- and beta-tubulin heterodimers. Microtubules grow by the addition of GTP-tubulin dimers to the microtubule end, where a stabilizing cap forms. Below the cap, tubulin dimers are in GDP-bound state, owing to GTPase activity of alpha-tubulin. The polypeptide is Tubulin alpha-3 chain (Homarus americanus (American lobster)).